A 619-amino-acid polypeptide reads, in one-letter code: Glucokinase regulatory protein (619 aa).

SIS domains follow at residues 90–283 (VQEV…AESN) and 319–498 (TATS…LRGK). 107–109 (CGT) serves as a coordination point for keto-D-fructose 6-phosphate. Beta-D-fructose 1-phosphate contacts are provided by residues 109 to 110 (TS), glutamate 153, 179 to 181 (SCG), and glutamate 347. Keto-D-fructose 6-phosphate is bound by residues 179–183 (SCGLS) and glutamate 347. The essential for interaction with GCK stretch occupies residues 462–464 (ILF). Lysine 513 is a binding site for keto-D-fructose 6-phosphate. Lysine 513 is a beta-D-fructose 1-phosphate binding site.

It belongs to the GCKR family. In terms of assembly, interacts (fructose 6-phosphate bound form) with gck.

The protein resides in the nucleus. Its subcellular location is the cytoplasm. It localises to the mitochondrion. Functionally, regulates glucokinase (gck) by forming an inactive complex with this enzyme. The affinity of gckr for gck is modulated by fructose metabolites: gckr with bound fructose 6-phosphate has increased affinity for gck, while gckr with bound fructose 1-phosphate has strongly decreased affinity for gck and does not inhibit gck activity. The chain is Glucokinase regulatory protein from Xenopus laevis (African clawed frog).